The sequence spans 658 residues: Glycogen debranching enzyme (658 aa).

The active-site Nucleophile is Asp335. Glu370 functions as the Proton donor in the catalytic mechanism. Over residues 457-468 (NDANGEGNRDGT) the composition is skewed to basic and acidic residues. Residues 457-481 (NDANGEGNRDGTDSNFSNNHGTEGL) form a disordered region.

The protein belongs to the glycosyl hydrolase 13 family.

The enzyme catalyses Hydrolysis of (1-&gt;6)-alpha-D-glucosidic linkages to branches with degrees of polymerization of three or four glucose residues in limit dextrin.. It functions in the pathway glycan degradation; glycogen degradation. Functionally, removes maltotriose and maltotetraose chains that are attached by 1,6-alpha-linkage to the limit dextrin main chain, generating a debranched limit dextrin. In Pectobacterium atrosepticum (strain SCRI 1043 / ATCC BAA-672) (Erwinia carotovora subsp. atroseptica), this protein is Glycogen debranching enzyme.